The sequence spans 501 residues: Cytochrome P450 3A6 (501 aa).

Heme is bound at residue Cys440.

Belongs to the cytochrome P450 family. The cofactor is heme.

It is found in the endoplasmic reticulum membrane. The protein resides in the microsome membrane. It catalyses the reaction an organic molecule + reduced [NADPH--hemoprotein reductase] + O2 = an alcohol + oxidized [NADPH--hemoprotein reductase] + H2O + H(+). Its function is as follows. Exhibits progesterone 6 beta-hydroxylase activity. This is Cytochrome P450 3A6 (CYP3A6) from Oryctolagus cuniculus (Rabbit).